The primary structure comprises 150 residues: Large-conductance mechanosensitive channel (150 aa).

A run of 2 helical transmembrane segments spans residues 14–34 (VIDL…VTSL) and 81–101 (GLFI…FIVI).

Belongs to the MscL family. Homopentamer.

It is found in the cell membrane. Its function is as follows. Channel that opens in response to stretch forces in the membrane lipid bilayer. May participate in the regulation of osmotic pressure changes within the cell. In Desulfitobacterium hafniense (strain DSM 10664 / DCB-2), this protein is Large-conductance mechanosensitive channel.